The following is a 699-amino-acid chain: MSKINKLEHIRNIGICAHIDAGKTTTTERILYYTGKSHKIGEVHEGGATMDWMEQEQERGITITSAATTCRWQDKIINIIDTPGHVDFTIEVERSLRVLDGAVAVFDGVAGVEPQSETVWRQADKYNVPRMCFVNKMDRMGADFYRCVEMLKDRLGAKPLVIQLPVGIEENFKGIIDLIKMKAVIWKDEALGAEYFEEDIPADMKDKAEEYRAKLLDMVVELDDHVMEKYLSGEEVTAEEIKRLIRKGTISAAFYPVLCGSAFKNKGVQPLLDAVVDFLPSPIDIGIVKGMEVSTGEEKDFPISVTEPFAALAFKIMNDPFVGSLTFIRIYSGKITSGTTVINTVKNKREKIGRMLLMHANNREDVKEASAGDIVALAGLKDTTTGDTLSDIDQQVILERMEFPEPVIELAVEPKSTADQEKMGLALSRLAAEDPSFRVSTDYETGQTVIKGMGELHLEIIIDRMRREFKVEANIGAPQVAYRETITKVCEIDYTHKKQSGGAGQFARVKIIFEPLKEVKDLKDEDKNKIFVFESKIIGGAVPKEYIPGVEKGLNNIRETGVIAGYPMIDFKATLVDGAFHDVDSSVLAFEIAAKAAFREGMPKGNPKLLEPIMQVEVITPDEYMGDIIGDLNSRRGQIQSMDPRGNAQVVTANVPLAEMFGYVNTLRSLSQGRAQFSMIFSHYDQVPSQVADIIKAKK.

The tr-type G domain maps to 8–283 (EHIRNIGICA…AVVDFLPSPI (276 aa)). GTP-binding positions include 17–24 (AHIDAGKT), 81–85 (DTPGH), and 135–138 (NKMD).

This sequence belongs to the TRAFAC class translation factor GTPase superfamily. Classic translation factor GTPase family. EF-G/EF-2 subfamily.

Its subcellular location is the cytoplasm. Functionally, catalyzes the GTP-dependent ribosomal translocation step during translation elongation. During this step, the ribosome changes from the pre-translocational (PRE) to the post-translocational (POST) state as the newly formed A-site-bound peptidyl-tRNA and P-site-bound deacylated tRNA move to the P and E sites, respectively. Catalyzes the coordinated movement of the two tRNA molecules, the mRNA and conformational changes in the ribosome. The chain is Elongation factor G from Rickettsia conorii (strain ATCC VR-613 / Malish 7).